A 286-amino-acid chain; its full sequence is Secretory carrier-associated membrane protein 2 (286 aa).

Composition is skewed to basic and acidic residues over residues 1–10 (MAGRYDRNPF) and 54–63 (STKDMKKKEK). Residues 1–63 (MAGRYDRNPF…STKDMKKKEK (63 aa)) form a disordered region. The Cytoplasmic portion of the chain corresponds to 1 to 126 (MAGRYDRNPF…LQRMQYLAFS (126 aa)). The stretch at 52-89 (LDSTKDMKKKEKELQAKEAELNKRESELRRREEAASRA) forms a coiled coil. A run of 4 helical transmembrane segments spans residues 127–147 (SLLGLAACLFWNIIATTAAWI), 152–172 (VMIWLLAIIYFISGVPGAYVL), 189–209 (FGWFFLFYLIHILFCIWSAVA), and 237–257 (IFYFIGFGLFCLESLLSVVVI). Over 258–286 (QQVYMYFRGSGKAAEMKREAARGAMRSAF) the chain is Cytoplasmic.

This sequence belongs to the SCAMP family.

Its subcellular location is the cell membrane. It localises to the cytoplasmic vesicle. The protein resides in the secretory vesicle membrane. In terms of biological role, probably involved in membrane trafficking. In Oryza sativa subsp. japonica (Rice), this protein is Secretory carrier-associated membrane protein 2 (SCAMP2).